A 103-amino-acid chain; its full sequence is Toxin BMLCL (103 aa).

The signal sequence occupies residues 1–21 (MKTLLLTLVVVTIICLDLGYT). 5 cysteine pairs are disulfide-bonded: Cys24–Cys45, Cys27–Cys37, Cys38–Cys72, Cys76–Cys90, and Cys91–Cys96.

It belongs to the three-finger toxin family. Ancestral subfamily. Orphan group XVII sub-subfamily. In terms of tissue distribution, expressed by the venom gland.

The protein localises to the secreted. Interacts with high efficiency with both neuronal alpha-7/CHRNA7 and muscle type nicotinic acetylcholine receptors (nAChRs). Tested on human alpha-7/CHRNA7 nAChR (IC(50)=42 nM), T.californica muscle receptor (IC(50)=31 nM), L.stagnalis and A.californica acetylcholine-binding proteins (IC(50)=333 nM and 3.4 uM, respectively). The polypeptide is Toxin BMLCL (Bungarus multicinctus (Many-banded krait)).